The sequence spans 26 residues: Hemocyanin subunit 3 (26 aa).

The protein belongs to the tyrosinase family. Hemocyanin subfamily. As to expression, hemolymph.

It is found in the secreted. Its subcellular location is the extracellular space. Its function is as follows. Hemocyanins are copper-containing oxygen carriers occurring freely dissolved in the hemolymph of many mollusks and arthropods. The polypeptide is Hemocyanin subunit 3 (Homarus americanus (American lobster)).